The sequence spans 442 residues: Tryptophan synthase beta chain 2 (442 aa).

Lys-122 bears the N6-(pyridoxal phosphate)lysine mark.

This sequence belongs to the TrpB family. In terms of assembly, tetramer of two alpha and two beta chains. Requires pyridoxal 5'-phosphate as cofactor.

It carries out the reaction (1S,2R)-1-C-(indol-3-yl)glycerol 3-phosphate + L-serine = D-glyceraldehyde 3-phosphate + L-tryptophan + H2O. The protein operates within amino-acid biosynthesis; L-tryptophan biosynthesis; L-tryptophan from chorismate: step 5/5. Functionally, the beta subunit is responsible for the synthesis of L-tryptophan from indole and L-serine. The protein is Tryptophan synthase beta chain 2 (trpB2) of Methanosarcina mazei (strain ATCC BAA-159 / DSM 3647 / Goe1 / Go1 / JCM 11833 / OCM 88) (Methanosarcina frisia).